A 391-amino-acid polypeptide reads, in one-letter code: Formate-dependent phosphoribosylglycinamide formyltransferase (391 aa).

N(1)-(5-phospho-beta-D-ribosyl)glycinamide-binding positions include 20–21 (EL) and Glu-80. Residues Arg-112, Lys-153, 158-163 (SSGKGQ), 193-196 (EGFI), and Glu-201 each bind ATP. The ATP-grasp domain occupies 117–306 (RLAAEELDLS…EFALHVRAFT (190 aa)). Glu-265 and Glu-277 together coordinate Mg(2+). N(1)-(5-phospho-beta-D-ribosyl)glycinamide contacts are provided by residues Asp-284, Lys-354, and 361–362 (RR).

Belongs to the PurK/PurT family. Homodimer.

The enzyme catalyses N(1)-(5-phospho-beta-D-ribosyl)glycinamide + formate + ATP = N(2)-formyl-N(1)-(5-phospho-beta-D-ribosyl)glycinamide + ADP + phosphate + H(+). It functions in the pathway purine metabolism; IMP biosynthesis via de novo pathway; N(2)-formyl-N(1)-(5-phospho-D-ribosyl)glycinamide from N(1)-(5-phospho-D-ribosyl)glycinamide (formate route): step 1/1. Involved in the de novo purine biosynthesis. Catalyzes the transfer of formate to 5-phospho-ribosyl-glycinamide (GAR), producing 5-phospho-ribosyl-N-formylglycinamide (FGAR). Formate is provided by PurU via hydrolysis of 10-formyl-tetrahydrofolate. This is Formate-dependent phosphoribosylglycinamide formyltransferase from Vibrio parahaemolyticus serotype O3:K6 (strain RIMD 2210633).